Here is a 476-residue protein sequence, read N- to C-terminus: Probable cytosolic Fe-S cluster assembly factor GH10760 (476 aa).

[4Fe-4S] cluster contacts are provided by Cys23, Cys68, Cys71, Cys74, Cys187, Cys243, Cys395, and Cys399.

This sequence belongs to the NARF family.

In terms of biological role, component of the cytosolic iron-sulfur (Fe/S) protein assembly machinery. Required for maturation of extramitochondrial Fe/S proteins. This chain is Probable cytosolic Fe-S cluster assembly factor GH10760, found in Drosophila grimshawi (Hawaiian fruit fly).